A 389-amino-acid polypeptide reads, in one-letter code: Formate-dependent phosphoribosylglycinamide formyltransferase (389 aa).

N(1)-(5-phospho-beta-D-ribosyl)glycinamide-binding positions include 12–13 (EL) and glutamate 72. Residues arginine 104, lysine 145, 150 to 155 (SSGKGQ), 185 to 188 (EAFV), and glutamate 193 each bind ATP. One can recognise an ATP-grasp domain in the interval 109 to 300 (DLASKELGLR…EFELHARAVL (192 aa)). Mg(2+) contacts are provided by glutamate 258 and glutamate 270. N(1)-(5-phospho-beta-D-ribosyl)glycinamide is bound by residues aspartate 277, lysine 348, and 355–356 (RR).

The protein belongs to the PurK/PurT family. In terms of assembly, homodimer.

It carries out the reaction N(1)-(5-phospho-beta-D-ribosyl)glycinamide + formate + ATP = N(2)-formyl-N(1)-(5-phospho-beta-D-ribosyl)glycinamide + ADP + phosphate + H(+). It functions in the pathway purine metabolism; IMP biosynthesis via de novo pathway; N(2)-formyl-N(1)-(5-phospho-D-ribosyl)glycinamide from N(1)-(5-phospho-D-ribosyl)glycinamide (formate route): step 1/1. Involved in the de novo purine biosynthesis. Catalyzes the transfer of formate to 5-phospho-ribosyl-glycinamide (GAR), producing 5-phospho-ribosyl-N-formylglycinamide (FGAR). Formate is provided by PurU via hydrolysis of 10-formyl-tetrahydrofolate. The protein is Formate-dependent phosphoribosylglycinamide formyltransferase of Chlorobium phaeobacteroides (strain DSM 266 / SMG 266 / 2430).